The sequence spans 241 residues: Thyroid transcription factor 1-associated protein 26 (241 aa).

Disordered regions lie at residues methionine 1–valine 22 and lysine 182–lysine 205. A compositionally biased stretch (basic and acidic residues) spans lysine 186–arginine 202.

This sequence belongs to the TAP26 family. Interacts with NKX2-1. In terms of tissue distribution, ubiquitously expressed. In lung, expression is restricted to the alveolar epithelial cells.

The protein localises to the nucleus. Its function is as follows. Component of the transcription complexes of the pulmonary surfactant-associated protein-B (SFTPB) and -C (SFTPC). Enhances homeobox protein Nkx-2.1-activated SFTPB and SFTPC promoter activities. The sequence is that of Thyroid transcription factor 1-associated protein 26 (CCDC59) from Homo sapiens (Human).